A 763-amino-acid chain; its full sequence is Amine oxidase [copper-containing] 3 (763 aa).

Residues threonine 2 to threonine 6 lie on the Cytoplasmic side of the membrane. A helical; Signal-anchor for type II membrane protein membrane pass occupies residues leucine 7–glycine 27. At arginine 28 to lysine 763 the chain is on the extracellular side. An N-linked (GlcNAc...) asparagine glycan is attached at asparagine 137. Cysteine 198 and cysteine 199 are joined by a disulfide. Residues asparagine 232 and asparagine 294 are each glycosylated (N-linked (GlcNAc...) asparagine). The Proton acceptor role is filled by aspartate 386. A disulfide bridge connects residues cysteine 404 and cysteine 430. Tyrosine 471 (schiff-base intermediate with substrate; via topaquinone) is an active-site residue. Residue tyrosine 471 is modified to 2',4',5'-topaquinone. Cu(2+) is bound by residues histidine 520 and histidine 522. Ca(2+) is bound by residues aspartate 529, leucine 530, aspartate 531, and glutamate 572. N-linked (GlcNAc...) asparagine glycans are attached at residues asparagine 581 and asparagine 592. Residues glutamate 641 and phenylalanine 663 each coordinate Ca(2+). N-linked (GlcNAc...) asparagine glycosylation is present at asparagine 666. Residues glutamate 667, aspartate 673, and leucine 674 each contribute to the Ca(2+) site. Histidine 684 contacts Cu(2+). A disulfide bond links cysteine 734 and cysteine 741.

Belongs to the copper/topaquinone oxidase family. Homodimer; disulfide-linked. Probably forms heterodimers with AOC2. Requires Cu(2+) as cofactor. It depends on Ca(2+) as a cofactor. L-topaquinone serves as cofactor. Topaquinone (TPQ) is generated by copper-dependent autoxidation of a specific tyrosyl residue. In terms of processing, N- and O-glycosylated. Highly expressed in adipocytes, aorta and lung. Expressed at lower levels in heart, kidney, large intestine, liver, small intestine and stomach.

It is found in the cell membrane. It catalyses the reaction methylamine + O2 + H2O = formaldehyde + H2O2 + NH4(+). The catalysed reaction is benzylamine + O2 + H2O = benzaldehyde + H2O2 + NH4(+). The enzyme catalyses 2-phenylethylamine + O2 + H2O = 2-phenylacetaldehyde + H2O2 + NH4(+). Its function is as follows. Catalyzes the oxidative deamination of primary amines to the corresponding aldehydes with the concomitant production of hydrogen peroxide and ammonia. Has a preference for the primary monoamines methylamine and benzylamine. Could also act on 2-phenylethylamine but much less efficiently. At endothelial cells surface can also function as a cell adhesion protein that participates in lymphocyte extravasation and recirculation by mediating the binding of lymphocytes to peripheral lymph node vascular endothelial cells in an L-selectin-independent fashion. The polypeptide is Amine oxidase [copper-containing] 3 (Rattus norvegicus (Rat)).